The sequence spans 619 residues: Auxin efflux carrier component 7 (619 aa).

Residues 1–7 (MITWHDL) are Extracellular-facing. A helical transmembrane segment spans residues 8–28 (YTVLTAVIPLYVAMILAYGSV). Residues 29-38 (RWWKIFSPDQ) are Cytoplasmic-facing. The helical transmembrane segment at 39-59 (CSGINRFVAIFAVPLLSFHFI) threads the bilayer. A (indol-3-yl)acetate-binding site is contributed by valine 51. Residues 60-71 (SSNNPYAMNLRF) are Extracellular-facing. A helical membrane pass occupies residues 72 to 92 (IAADTLQKLIMLTLLIIWANF). At 93–101 (TRSGSLEWS) the chain is on the cytoplasmic side. A helical membrane pass occupies residues 102–122 (ITIFSLSTLPNTLVMGIPLLI). The (indol-3-yl)acetate site is built by asparagine 112 and leucine 114. Residues 123–131 (AMYGEYSGS) lie on the Extracellular side of the membrane. Residues 132-152 (LMVQIVVLQCIIWYTLLLFLF) form a helical membrane-spanning segment. Tyrosine 145 lines the (indol-3-yl)acetate pocket. Residues 153-479 (EYRGAKILIM…LIRNPNTYSS (327 aa)) lie on the Cytoplasmic side of the membrane. A phosphoserine mark is found at serine 229, serine 246, and serine 286. Positions 306–340 (GAPGSYPAPNPEFSTGNKTGSKAPKENHHHVGKSN) are disordered. Threonine 320 is subject to Phosphothreonine. A Phosphoserine modification is found at serine 357. Residues 393–413 (HTQNGENKAGPMNGDYGGEEE) form a disordered region. Residues 480–500 (LIGLIWALVAFRWDVAMPKII) traverse the membrane as a helical segment. The Extracellular portion of the chain corresponds to 501–503 (QQS). Residues 504–524 (ISILSDAGLGMAMFSLGLFMA) form a helical membrane-spanning segment. Residues 525–538 (LQPKLIACGNSTAT) lie on the Cytoplasmic side of the membrane. A helical membrane pass occupies residues 539–559 (FAMAVRFFTGPAVMAVAAMAI). Topologically, residues 560–564 (GLRGD) are extracellular. The chain crosses the membrane as a helical span at residues 565 to 585 (LLRVAIVQAALPQGIVPFVFA). Residues isoleucine 579 and valine 580 each coordinate (indol-3-yl)acetate. Residues 586–598 (KEYNVHPAILSTG) are Cytoplasmic-facing. A helical membrane pass occupies residues 599–619 (VIFGMLIALPITLVYYILLGL).

The protein belongs to the auxin efflux carrier (TC 2.A.69.1) family. In terms of assembly, homodimer.

It is found in the cell membrane. Acts as a component of the auxin efflux carrier. Mediates the initial auxin gradient which contributes to the establishment of the apical-basal axis in early embryogenesis. Together with PIN3 and PIN4, involved in the connective auxin transport (CAT) that ensures communication across the shoot system, and modulates strigolactone-mediated shoot branching control. The abcb19 pin3 pin4 pin7 quadruple mutant exhibits an additive phenotype on strigolactone-mediated bud outgrowth responses and shoot branching control. In Arabidopsis thaliana (Mouse-ear cress), this protein is Auxin efflux carrier component 7.